A 202-amino-acid chain; its full sequence is Complement component C8 gamma chain (202 aa).

The signal sequence occupies residues 1–23; sequence MVLRGRAVLLAVLLAAGSLGRWA. Residues C96 and C188 are joined by a disulfide bond. N173 is a glycosylation site (N-linked (GlcNAc...) asparagine).

The protein belongs to the calycin superfamily. Lipocalin family. Heterotrimer of 3 chains: alpha (C8A), beta (C8B) and gamma (C8G); the alpha and gamma chains are disulfide bonded. Component of the membrane attack complex (MAC), composed of complement C5b, C6, C7, C8A, C8B, C8G and multiple copies of the pore-forming subunit C9.

It localises to the secreted. It is found in the target cell membrane. Membrane attack complex (MAC) assembly is inhibited by CD59, thereby protecting self-cells from damage during complement activation. MAC assembly is also inhibited by clusterin (CLU) chaperones that inhibit polymerization of C9. In terms of biological role, component of the membrane attack complex (MAC), a multiprotein complex activated by the complement cascade, which inserts into a target cell membrane and forms a pore, leading to target cell membrane rupture and cell lysis. The MAC is initiated by proteolytic cleavage of C5 into complement C5b in response to the classical, alternative, lectin and GZMK complement pathways. The complement pathways consist in a cascade of proteins that leads to phagocytosis and breakdown of pathogens and signaling that strengthens the adaptive immune system. C8G, together with C8A and C8B, inserts into the target membrane, but does not form pores by itself. During MAC assembly, associates with C5b, C6 and C7 to form the C5b8 intermediate complex that inserts into the target membrane and traverses the bilayer increasing membrane rigidity. The chain is Complement component C8 gamma chain (C8G) from Oryctolagus cuniculus (Rabbit).